The chain runs to 406 residues: Phosphopentomutase (406 aa).

Mn(2+) contacts are provided by Asp-10, Asp-305, His-310, Asp-346, His-347, and His-358.

It belongs to the phosphopentomutase family. Mn(2+) serves as cofactor.

It is found in the cytoplasm. It catalyses the reaction 2-deoxy-alpha-D-ribose 1-phosphate = 2-deoxy-D-ribose 5-phosphate. The enzyme catalyses alpha-D-ribose 1-phosphate = D-ribose 5-phosphate. It participates in carbohydrate degradation; 2-deoxy-D-ribose 1-phosphate degradation; D-glyceraldehyde 3-phosphate and acetaldehyde from 2-deoxy-alpha-D-ribose 1-phosphate: step 1/2. In terms of biological role, isomerase that catalyzes the conversion of deoxy-ribose 1-phosphate (dRib-1-P) and ribose 1-phosphate (Rib-1-P) to deoxy-ribose 5-phosphate (dRib-5-P) and ribose 5-phosphate (Rib-5-P), respectively. This chain is Phosphopentomutase, found in Aliivibrio fischeri (strain MJ11) (Vibrio fischeri).